Here is a 211-residue protein sequence, read N- to C-terminus: Lipoprotein signal peptidase (211 aa).

3 consecutive transmembrane segments (helical) span residues 12–32 (LLAL…YLAV), 96–116 (AFRN…ILHY), and 127–147 (LQVA…DRLA). Active-site residues include Asp-153 and Asp-174. Residues 167 to 187 (WPTFNIADSLIVVGVALLVLH) form a helical membrane-spanning segment.

The protein belongs to the peptidase A8 family.

The protein localises to the cell inner membrane. It carries out the reaction Release of signal peptides from bacterial membrane prolipoproteins. Hydrolyzes -Xaa-Yaa-Zaa-|-(S,diacylglyceryl)Cys-, in which Xaa is hydrophobic (preferably Leu), and Yaa (Ala or Ser) and Zaa (Gly or Ala) have small, neutral side chains.. The protein operates within protein modification; lipoprotein biosynthesis (signal peptide cleavage). Functionally, this protein specifically catalyzes the removal of signal peptides from prolipoproteins. This is Lipoprotein signal peptidase from Anaeromyxobacter sp. (strain Fw109-5).